The primary structure comprises 188 residues: Pyridoxal 5'-phosphate synthase subunit PdxT (188 aa).

L-glutamine is bound at residue 46–48 (GES). Cysteine 78 functions as the Nucleophile in the catalytic mechanism. L-glutamine is bound by residues arginine 105 and 134 to 135 (IR). Active-site charge relay system residues include histidine 170 and glutamate 172.

It belongs to the glutaminase PdxT/SNO family. In the presence of PdxS, forms a dodecamer of heterodimers. Only shows activity in the heterodimer.

It carries out the reaction aldehydo-D-ribose 5-phosphate + D-glyceraldehyde 3-phosphate + L-glutamine = pyridoxal 5'-phosphate + L-glutamate + phosphate + 3 H2O + H(+). The enzyme catalyses L-glutamine + H2O = L-glutamate + NH4(+). It functions in the pathway cofactor biosynthesis; pyridoxal 5'-phosphate biosynthesis. Catalyzes the hydrolysis of glutamine to glutamate and ammonia as part of the biosynthesis of pyridoxal 5'-phosphate. The resulting ammonia molecule is channeled to the active site of PdxS. The chain is Pyridoxal 5'-phosphate synthase subunit PdxT from Thermotoga petrophila (strain ATCC BAA-488 / DSM 13995 / JCM 10881 / RKU-1).